Consider the following 129-residue polypeptide: Large ribosomal subunit protein bL19 (129 aa).

The protein belongs to the bacterial ribosomal protein bL19 family.

Its function is as follows. This protein is located at the 30S-50S ribosomal subunit interface and may play a role in the structure and function of the aminoacyl-tRNA binding site. The sequence is that of Large ribosomal subunit protein bL19 from Bordetella avium (strain 197N).